The sequence spans 212 residues: Ribonuclease HII (212 aa).

The RNase H type-2 domain occupies 12–201; it reads ELVAGVDEVG…VRAMLEQVSI (190 aa). The a divalent metal cation site is built by Asp18, Glu19, and Asp110.

Belongs to the RNase HII family. Mn(2+) serves as cofactor. It depends on Mg(2+) as a cofactor.

It localises to the cytoplasm. It catalyses the reaction Endonucleolytic cleavage to 5'-phosphomonoester.. Endonuclease that specifically degrades the RNA of RNA-DNA hybrids. This Stutzerimonas stutzeri (strain A1501) (Pseudomonas stutzeri) protein is Ribonuclease HII.